The chain runs to 892 residues: Alanine--tRNA ligase (892 aa).

Positions 594, 598, 702, and 706 each coordinate Zn(2+).

The protein belongs to the class-II aminoacyl-tRNA synthetase family. The cofactor is Zn(2+).

It localises to the cytoplasm. The enzyme catalyses tRNA(Ala) + L-alanine + ATP = L-alanyl-tRNA(Ala) + AMP + diphosphate. Functionally, catalyzes the attachment of alanine to tRNA(Ala) in a two-step reaction: alanine is first activated by ATP to form Ala-AMP and then transferred to the acceptor end of tRNA(Ala). Also edits incorrectly charged Ser-tRNA(Ala) and Gly-tRNA(Ala) via its editing domain. In Pyrobaculum arsenaticum (strain DSM 13514 / JCM 11321 / PZ6), this protein is Alanine--tRNA ligase.